Consider the following 459-residue polypeptide: N-chimaerin (459 aa).

The residue at position 2 (Ala-2) is an N-acetylalanine. One can recognise an SH2 domain in the interval 49-135; sequence EFHGMISREA…IETKAAEYIA (87 aa). Position 192 is a phosphothreonine (Thr-192). The Phorbol-ester/DAG-type zinc finger occupies 205 to 255; it reads IHNFKVHTFRGPHWCEYCANFMWGLIAQGVKCADCGLNVHKQCSKMVPNDC. Positions 268-459 constitute a Rho-GAP domain; that stretch reads CDLTTLVKAH…LLIKNEDILF (192 aa). Residue Thr-340 is modified to Phosphothreonine.

Interacts with EPHA4; effector of EPHA4 in axon guidance linking EPHA4 activation to RAC1 regulation. Post-translationally, phosphorylated. Phosphorylation is EPHA4 kinase activity-dependent. As to expression, in neurons in brain regions that are involved in learning and memory processes.

Functionally, GTPase-activating protein for p21-rac and a phorbol ester receptor. Involved in the assembly of neuronal locomotor circuits as a direct effector of EPHA4 in axon guidance. The protein is N-chimaerin (CHN1) of Homo sapiens (Human).